The primary structure comprises 463 residues: Sugar transporter ERD6-like 7 (463 aa).

12 helical membrane passes run 26–46 (WMVYLSTFVAVCGSFAFGSCA), 69–89 (LFGSLLTFGAMIGAITSGPIA), 103–123 (AFCVVGWLAIIFAKGVVALDL), 126–146 (LATGYGMGAFSYVVPIFIAEI), 157–177 (TLNQILICTGVSVSFIIGTLV), 181–201 (VLALIGIIPCAASFLGLFFIP), 264–284 (VLIAFGLMVFQQFGGINGICF), 299–319 (LGMIIYAVLQVVITALNAPIV), 327–347 (LLLVSATGLVIGCLIAAVSFY), 357–377 (AVPVLAVVGIMVYIGSFSAGM), 396–416 (VAGGMATLVNWFGAWAVSYTF), and 426–446 (GTFLIYAAINALAIVFVIAIV).

The protein belongs to the major facilitator superfamily. Sugar transporter (TC 2.A.1.1) family.

The protein localises to the membrane. Functionally, sugar transporter. This chain is Sugar transporter ERD6-like 7, found in Arabidopsis thaliana (Mouse-ear cress).